The sequence spans 124 residues: Small ribosomal subunit protein bS16 (124 aa).

Residues 81 to 90 (LKKRPARNNP) are compositionally biased toward basic residues. The disordered stretch occupies residues 81–124 (LKKRPARNNPHKGEPGKKAQERIAAAKQAAEDAAAAAEADSASE). Basic and acidic residues predominate over residues 91–101 (HKGEPGKKAQE). Residues 102–124 (RIAAAKQAAEDAAAAAEADSASE) are compositionally biased toward low complexity.

Belongs to the bacterial ribosomal protein bS16 family.

The sequence is that of Small ribosomal subunit protein bS16 from Bartonella tribocorum (strain CIP 105476 / IBS 506).